The chain runs to 472 residues: Succinate-semialdehyde dehydrogenase [NADP(+)] (472 aa).

Residues W134–N135, K158–S161, and G210–S211 contribute to the NADP(+) site. E232 (proton acceptor) is an active-site residue. L233 contributes to the NADP(+) binding site. The active-site Nucleophile is the C266. Position 363 (E363) interacts with NADP(+).

Belongs to the aldehyde dehydrogenase family.

The catalysed reaction is succinate semialdehyde + NADP(+) + H2O = succinate + NADPH + 2 H(+). Functionally, catalyzes the NADP(+)-dependent oxidation of succinate semialdehyde to succinate. It is believed to be the main source of succinate semialdehyde dehydrogenase activity in Mycobacterium. This chain is Succinate-semialdehyde dehydrogenase [NADP(+)] (gabD1), found in Mycolicibacterium paratuberculosis (strain ATCC BAA-968 / K-10) (Mycobacterium paratuberculosis).